Consider the following 556-residue polypeptide: 2-succinyl-5-enolpyruvyl-6-hydroxy-3-cyclohexene-1-carboxylate synthase (556 aa).

This sequence belongs to the TPP enzyme family. MenD subfamily. In terms of assembly, homodimer. It depends on Mg(2+) as a cofactor. Mn(2+) serves as cofactor. Thiamine diphosphate is required as a cofactor.

It catalyses the reaction isochorismate + 2-oxoglutarate + H(+) = 5-enolpyruvoyl-6-hydroxy-2-succinyl-cyclohex-3-ene-1-carboxylate + CO2. It participates in quinol/quinone metabolism; 1,4-dihydroxy-2-naphthoate biosynthesis; 1,4-dihydroxy-2-naphthoate from chorismate: step 2/7. It functions in the pathway quinol/quinone metabolism; menaquinone biosynthesis. In terms of biological role, catalyzes the thiamine diphosphate-dependent decarboxylation of 2-oxoglutarate and the subsequent addition of the resulting succinic semialdehyde-thiamine pyrophosphate anion to isochorismate to yield 2-succinyl-5-enolpyruvyl-6-hydroxy-3-cyclohexene-1-carboxylate (SEPHCHC). The sequence is that of 2-succinyl-5-enolpyruvyl-6-hydroxy-3-cyclohexene-1-carboxylate synthase from Salmonella choleraesuis (strain SC-B67).